The chain runs to 791 residues: Cullin-2 (791 aa).

The Cullin neddylation domain occupies 722-784 (DRKYYMECAI…KMYIQRTDQN (63 aa)). Residue Lys-736 forms a Glycyl lysine isopeptide (Lys-Gly) (interchain with G-Cter in NEDD8) linkage.

This sequence belongs to the cullin family. As to quaternary structure, component of multiple CBC (Cul2-ElonginB-ElonginC) E3 ubiquitin-protein ligase complexes formed of cul-2, elb-1, elc-1, rbx-1 and a variable substrate recognition component. Component of the CBC(fem-1) E3 ubiquitin-protein ligase complex with fem-1, fem-2 and fem-3. The CBC(fem-1) complex interacts with tra-1 and promotes tra-1 degradation. Probable component of the CBC(lrr-1) E3 ubiquitin-protein ligase complex incuding cul-2, elb-1, elc-1, rbx-1 and lrr-1. The CBC(lrr-1) complex interacts with the DNA replisome complex at the end of S phase; the interaction promotes the release of components of the CMG helicase complex (a component of the replisome) from chromatin. Probable component of an CBC(zif-1) E3 ubiquitin-protein ligase including cul-2, elc-1, rbx-1 and zif-1. Part of an E3 ubiquitin-protein ligase complex including cul-2, elc-1 and zyg-11. Interacts with Skp1-related protein skr-10. Post-translationally, neddylated; which enhances the ubiquitination activity of CBC (Cul2-ElonginB-ElonginC) E3 ubiquitin-protein ligase complexes. In adults, highly expressed in meiotic cells and oocytes. In larvae, expressed in many proliferating cell types: P cells during the L1 stage; seam cells when they divide at every molt; vulval and somatic gonad cells in late L3 and L4 stages; and intestinal cells throughout larval development.

The protein resides in the cytoplasm. Its subcellular location is the nucleus. It functions in the pathway protein modification; protein ubiquitination. Its function is as follows. Core component of multiple cullin-RING-based CBC (Cul2-ElonginB-ElonginC) E3 ubiquitin-protein ligase complexes which mediate the ubiquitination and subsequent proteasomal degradation of target proteins. As a scaffold protein may contribute to catalysis through positioning of the substrate and the ubiquitin-conjugating enzyme. The functional specificity of the CBC complex depends on the variable substrate recognition component. May function in ubiquitin-mediated degradation of CKIs to target cki-1 for degradation. CBC(zif-1) may ensure germline precursor cell asymmetry by targeting germline proteins for destruction if expressed in non-germline cells. As part of the CBC(fem-1) complex directs ubiquitination of tra-1. As part of the CBC(lrr-1) complex, required for the ubiquitination and dissasembly of the CMG helicase complex from chromatin at the end of DNA replication. Positive cell-cycle regulator that is required at two distinct points in the cell cycle; the G1-to-S-phase transition and mitosis. Also required for proper cytoskeletal movement and mitotic chromosome condensation. The chain is Cullin-2 from Caenorhabditis elegans.